A 171-amino-acid polypeptide reads, in one-letter code: 16S rRNA aminocarboxypropyltransferase (171 aa).

S-adenosyl-L-methionine contacts are provided by threonine 17, leucine 67, leucine 90, and threonine 109.

Belongs to the TDD superfamily. TSR3 family.

It is found in the cytoplasm. The catalysed reaction is an N(1)-methylpseudouridine in rRNA + S-adenosyl-L-methionine = N(1)-methyl-N(3)-[(3S)-3-amino-3-carboxypropyl]pseudouridine in rRNA + S-methyl-5'-thioadenosine + H(+). Functionally, aminocarboxypropyltransferase that catalyzes the aminocarboxypropyl transfer on pseudouridine corresponding to position 914 in M.jannaschii 16S rRNA. It constitutes the last step in biosynthesis of the hypermodified N1-methyl-N3-(3-amino-3-carboxypropyl) pseudouridine (m1acp3-Psi). This is 16S rRNA aminocarboxypropyltransferase from Methanobrevibacter smithii (strain ATCC 35061 / DSM 861 / OCM 144 / PS).